The chain runs to 508 residues: Anaerobic nitric oxide reductase transcription regulator NorR (508 aa).

Residue D56 is modified to 4-aspartylphosphate. The Sigma-54 factor interaction domain maps to 186–415 (MIGQSPAMAR…LEHAIHRAAV (230 aa)). ATP is bound by residues 214 to 221 (GETGVGKE) and 277 to 286 (ADQGTLFLDE). The segment at residues 483 to 502 (WAATARALELDSGNLHRLAK) is a DNA-binding region (H-T-H motif).

Its pathway is nitrogen metabolism; nitric oxide reduction. Functionally, required for the expression of anaerobic nitric oxide (NO) reductase, acts as a transcriptional activator for at least the norVW operon. Activation also requires sigma-54. The sequence is that of Anaerobic nitric oxide reductase transcription regulator NorR from Aeromonas hydrophila subsp. hydrophila (strain ATCC 7966 / DSM 30187 / BCRC 13018 / CCUG 14551 / JCM 1027 / KCTC 2358 / NCIMB 9240 / NCTC 8049).